The sequence spans 305 residues: UDP-3-O-acyl-N-acetylglucosamine deacetylase (305 aa).

Zn(2+)-binding residues include histidine 78, histidine 237, and aspartate 241. The active-site Proton donor is histidine 264.

Belongs to the LpxC family. Zn(2+) serves as cofactor.

It catalyses the reaction a UDP-3-O-[(3R)-3-hydroxyacyl]-N-acetyl-alpha-D-glucosamine + H2O = a UDP-3-O-[(3R)-3-hydroxyacyl]-alpha-D-glucosamine + acetate. It functions in the pathway glycolipid biosynthesis; lipid IV(A) biosynthesis; lipid IV(A) from (3R)-3-hydroxytetradecanoyl-[acyl-carrier-protein] and UDP-N-acetyl-alpha-D-glucosamine: step 2/6. Functionally, catalyzes the hydrolysis of UDP-3-O-myristoyl-N-acetylglucosamine to form UDP-3-O-myristoylglucosamine and acetate, the committed step in lipid A biosynthesis. In Burkholderia lata (strain ATCC 17760 / DSM 23089 / LMG 22485 / NCIMB 9086 / R18194 / 383), this protein is UDP-3-O-acyl-N-acetylglucosamine deacetylase.